Consider the following 279-residue polypeptide: PHO85 cyclin-1 (279 aa).

The region spanning Asp-19–Arg-152 is the Cyclin N-terminal domain. Residues Leu-29 to Asn-36 form a required for degradation by DMA1 region. Thr-39 is modified (phosphothreonine; by PHO85). Phosphoserine; by PHO85 is present on Ser-43. Residues Lys-82 and Lys-121 each participate in a glycyl lysine isopeptide (Lys-Gly) (interchain with G-Cter in ubiquitin) cross-link.

Belongs to the cyclin family. PCL1,2 subfamily. In terms of assembly, forms a cyclin-CDK complex with PHO85. Interacts with HMS1, NCP1 and NPA3. Interacts with DMA1. Post-translationally, phosphorylated by PHO85; necessary for interaction with DMA1 and subsequent degradation. In terms of processing, ubiquitinated by E3 ubiquitin ligase DMA1 in response to nutrient condition; this targets PCL1 for destruction.

Its subcellular location is the cytoplasm. The protein localises to the nucleus. In terms of biological role, G1/S-specific cyclin partner of the cyclin-dependent kinase (CDK) PHO85. Essential for the control of the cell cycle at the G1/S (start) transition. The PCL1-PHO85 cyclin-CDK holoenzyme is involved in phosphorylation of the CDK inhibitor (CKI) SIC1, which is required for its ubiquitination and degradation, releasing repression of b-type cyclins and promoting exit from mitosis. Together with cyclin PCL2, positively controls degradation of sphingoid long chain base kinase LCB4. PCL1-PHO85 phosphorylates LCB4, which is required for its ubiquitination and degradation. PCL1-PHO85 also phosphorylates HMS1, NCP1 and NPA3, which may all have a role in mitotic exit. The polypeptide is PHO85 cyclin-1 (Saccharomyces cerevisiae (strain ATCC 204508 / S288c) (Baker's yeast)).